A 506-amino-acid polypeptide reads, in one-letter code: UDP-N-acetylmuramoylalanine--D-glutamate ligase (506 aa).

128–134 contacts ATP; the sequence is GTNGKTT.

The protein belongs to the MurCDEF family.

It localises to the cytoplasm. It carries out the reaction UDP-N-acetyl-alpha-D-muramoyl-L-alanine + D-glutamate + ATP = UDP-N-acetyl-alpha-D-muramoyl-L-alanyl-D-glutamate + ADP + phosphate + H(+). It participates in cell wall biogenesis; peptidoglycan biosynthesis. In terms of biological role, cell wall formation. Catalyzes the addition of glutamate to the nucleotide precursor UDP-N-acetylmuramoyl-L-alanine (UMA). This chain is UDP-N-acetylmuramoylalanine--D-glutamate ligase, found in Albidiferax ferrireducens (strain ATCC BAA-621 / DSM 15236 / T118) (Rhodoferax ferrireducens).